The sequence spans 408 residues: Protein BTN1 (408 aa).

The signal sequence occupies residues 1–30; sequence MSDKSHQIYCYFWLFGLINNVLYVVILSAA. 7 helical membrane-spanning segments follow: residues 42–62, 80–100, 128–148, 150–170, 238–258, 323–343, and 369–389; these read LVLLADIFPSLAIKLCSPFFI, LGMFLVSFKNLFVCLLGISFA, SGTGGAGIIGGASYMFLTSIF, VPVKLTLLVFSLLPFAFLFYF, TVYLFEYLINQAVAPTLLFPI, WFYVTHSPWAVMILIFYEGFL, and GAVSIADSFGVFLAALLGLGL.

It belongs to the battenin family.

It localises to the vacuole membrane. Plays a role in vacuolar arginine transport. Involved in pH homeostasis. May be involved in ion homeostasis together with IST2. Not necessary for mitochondrial function or ATP synthase degradation. This chain is Protein BTN1 (YHC3), found in Saccharomyces cerevisiae (strain ATCC 204508 / S288c) (Baker's yeast).